The primary structure comprises 127 residues: Adult-specific rigid cuticular protein 12.6 (127 aa).

The Chitin-binding type R&amp;R domain occupies glycine 9–proline 87.

In terms of biological role, component of the rigid cuticle of the spider. The chain is Adult-specific rigid cuticular protein 12.6 from Araneus diadematus (European garden spider).